The chain runs to 546 residues: Glucose-6-phosphate isomerase (546 aa).

Glu356 functions as the Proton donor in the catalytic mechanism. Active-site residues include His387 and Lys507.

This sequence belongs to the GPI family.

The protein resides in the cytoplasm. It catalyses the reaction alpha-D-glucose 6-phosphate = beta-D-fructose 6-phosphate. It functions in the pathway carbohydrate biosynthesis; gluconeogenesis. Its pathway is carbohydrate degradation; glycolysis; D-glyceraldehyde 3-phosphate and glycerone phosphate from D-glucose: step 2/4. Functionally, catalyzes the reversible isomerization of glucose-6-phosphate to fructose-6-phosphate. In Syntrophus aciditrophicus (strain SB), this protein is Glucose-6-phosphate isomerase.